The sequence spans 430 residues: Small ribosomal subunit protein uS5m (430 aa).

Residues 218–282 (FDTRILEVRN…NRAVHHLHYI (65 aa)) form the S5 DRBM domain.

This sequence belongs to the universal ribosomal protein uS5 family. Component of the mitochondrial small ribosomal subunit (mt-SSU). Mature mammalian 55S mitochondrial ribosomes consist of a small (28S) and a large (39S) subunit. The 28S small subunit contains a 12S ribosomal RNA (12S mt-rRNA) and 30 different proteins. The 39S large subunit contains a 16S rRNA (16S mt-rRNA), a copy of mitochondrial valine transfer RNA (mt-tRNA(Val)), which plays an integral structural role, and 52 different proteins.

Its subcellular location is the mitochondrion. This Homo sapiens (Human) protein is Small ribosomal subunit protein uS5m (MRPS5).